A 149-amino-acid polypeptide reads, in one-letter code: Ribonuclease pancreatic (149 aa).

The signal sequence occupies residues 1–25 (MGLEKSFILFSLLVLVLGWVQPSLG). 2 residues coordinate substrate: K32 and R35. Residue H37 is the Proton acceptor of the active site. 4 cysteine pairs are disulfide-bonded: C51–C109, C65–C120, C83–C135, and C90–C97. Substrate is bound by residues 66-70 (KPVNT), K91, and R110. The active-site Proton donor is H144.

It belongs to the pancreatic ribonuclease family. As to quaternary structure, monomer. Interacts with and forms tight 1:1 complexes with RNH1. Dimerization of two such complexes may occur. Interaction with RNH1 inhibits this protein. In terms of tissue distribution, pancreas.

It is found in the secreted. It catalyses the reaction an [RNA] containing cytidine + H2O = an [RNA]-3'-cytidine-3'-phosphate + a 5'-hydroxy-ribonucleotide-3'-[RNA].. The catalysed reaction is an [RNA] containing uridine + H2O = an [RNA]-3'-uridine-3'-phosphate + a 5'-hydroxy-ribonucleotide-3'-[RNA].. In terms of biological role, endonuclease that catalyzes the cleavage of RNA on the 3' side of pyrimidine nucleotides. Acts on single-stranded and double-stranded RNA. The chain is Ribonuclease pancreatic (RNASE1) from Leopoldamys edwardsi (Edwards's long-tailed giant rat).